The primary structure comprises 276 residues: NH(3)-dependent NAD(+) synthetase (276 aa).

43-50 (GISGGVDS) contributes to the ATP binding site. Asp-49 contacts Mg(2+). Arg-146 lines the deamido-NAD(+) pocket. Residue Thr-166 participates in ATP binding. Mg(2+) is bound at residue Glu-171. Deamido-NAD(+) contacts are provided by Lys-179 and Asp-186. ATP-binding residues include Lys-195 and Thr-217. 266–267 (HK) provides a ligand contact to deamido-NAD(+).

The protein belongs to the NAD synthetase family. Homodimer.

The catalysed reaction is deamido-NAD(+) + NH4(+) + ATP = AMP + diphosphate + NAD(+) + H(+). It functions in the pathway cofactor biosynthesis; NAD(+) biosynthesis; NAD(+) from deamido-NAD(+) (ammonia route): step 1/1. Functionally, catalyzes the ATP-dependent amidation of deamido-NAD to form NAD. Uses ammonia as a nitrogen source. This chain is NH(3)-dependent NAD(+) synthetase, found in Shewanella frigidimarina (strain NCIMB 400).